Here is a 566-residue protein sequence, read N- to C-terminus: NXPE family member 3 (566 aa).

The first 32 residues, 1–32, serve as a signal peptide directing secretion; the sequence is MEKYFPKYVPFFSLLALSGLLYLLWSITSLES. Asn64, Asn172, Asn242, Asn303, and Asn344 each carry an N-linked (GlcNAc...) asparagine glycan.

The protein belongs to the NXPE family.

The protein resides in the secreted. This is NXPE family member 3 (nxpe3) from Danio rerio (Zebrafish).